A 307-amino-acid chain; its full sequence is Mitogen-activated protein kinase kinase 7 (307 aa).

The Protein kinase domain occupies 45 to 303; it reads VEKLHVLGRG…ASQLLGHPFL (259 aa). ATP-binding positions include 51 to 59 and K74; that span reads LGRGSSGIV. D165 (proton acceptor) is an active-site residue. Residues S193 and S199 each carry the phosphoserine modification. The residue at position 203 (T203) is a Phosphothreonine.

This sequence belongs to the protein kinase superfamily. STE Ser/Thr protein kinase family. MAP kinase kinase subfamily. As to quaternary structure, interacts with MPK15. In terms of processing, phosphorylation at Ser-193 and Ser-199 by MAP kinase kinase kinases positively regulates kinase activity. As to expression, expressed in all tissues, with a relatively higher level in leaves and lower level in roots and flowers.

The catalysed reaction is L-seryl-[protein] + ATP = O-phospho-L-seryl-[protein] + ADP + H(+). The enzyme catalyses L-threonyl-[protein] + ATP = O-phospho-L-threonyl-[protein] + ADP + H(+). It carries out the reaction L-tyrosyl-[protein] + ATP = O-phospho-L-tyrosyl-[protein] + ADP + H(+). May function as a negative regulator of polar auxin transport. Positively regulates plant basal and systemic acquired resistance (SAR). Activates MPK3 and MPK6 in vitro. The polypeptide is Mitogen-activated protein kinase kinase 7 (MKK7) (Arabidopsis thaliana (Mouse-ear cress)).